A 430-amino-acid polypeptide reads, in one-letter code: Aspartate--tRNA(Asp/Asn) ligase (430 aa).

Residue E168 coordinates L-aspartate. The interval 190–193 is aspartate; it reads QLYK. R212 lines the L-aspartate pocket. ATP-binding positions include 212–214, 220–222, and E353; these read RAE and RHL. The Mg(2+) site is built by E353 and S356. Residues S356 and R360 each contribute to the L-aspartate site. Residue 401-404 coordinates ATP; sequence GAER.

The protein belongs to the class-II aminoacyl-tRNA synthetase family. Type 2 subfamily. Homodimer. The cofactor is Mg(2+).

The protein resides in the cytoplasm. The catalysed reaction is tRNA(Asx) + L-aspartate + ATP = L-aspartyl-tRNA(Asx) + AMP + diphosphate. In terms of biological role, aspartyl-tRNA synthetase with relaxed tRNA specificity since it is able to aspartylate not only its cognate tRNA(Asp) but also tRNA(Asn). Reaction proceeds in two steps: L-aspartate is first activated by ATP to form Asp-AMP and then transferred to the acceptor end of tRNA(Asp/Asn). This is Aspartate--tRNA(Asp/Asn) ligase from Archaeoglobus fulgidus (strain ATCC 49558 / DSM 4304 / JCM 9628 / NBRC 100126 / VC-16).